Consider the following 573-residue polypeptide: CTP synthase (573 aa).

Residues 1 to 281 (MGQTRIQART…DAYVVRRLGL (281 aa)) are amidoligase domain. Ser23 provides a ligand contact to CTP. Residue Ser23 coordinates UTP. Residues 24 to 29 (SLGKGL) and Asp81 contribute to the ATP site. Positions 81 and 155 each coordinate Mg(2+). CTP-binding positions include 162-164 (DIE), 202-207 (KTKPTQ), and Lys238. UTP is bound by residues 202–207 (KTKPTQ) and Lys238. Positions 306–554 (EVALVGKYVD…IAAALKYKLA (249 aa)) constitute a Glutamine amidotransferase type-1 domain. Gly369 contributes to the L-glutamine binding site. Residue Cys396 is the Nucleophile; for glutamine hydrolysis of the active site. L-glutamine-binding positions include 397 to 400 (LGLQ), Glu419, and Arg480. Residues His527 and Glu529 contribute to the active site.

It belongs to the CTP synthase family. As to quaternary structure, homotetramer.

It carries out the reaction UTP + L-glutamine + ATP + H2O = CTP + L-glutamate + ADP + phosphate + 2 H(+). The catalysed reaction is L-glutamine + H2O = L-glutamate + NH4(+). It catalyses the reaction UTP + NH4(+) + ATP = CTP + ADP + phosphate + 2 H(+). Its pathway is pyrimidine metabolism; CTP biosynthesis via de novo pathway; CTP from UDP: step 2/2. With respect to regulation, allosterically activated by GTP, when glutamine is the substrate; GTP has no effect on the reaction when ammonia is the substrate. The allosteric effector GTP functions by stabilizing the protein conformation that binds the tetrahedral intermediate(s) formed during glutamine hydrolysis. Inhibited by the product CTP, via allosteric rather than competitive inhibition. In terms of biological role, catalyzes the ATP-dependent amination of UTP to CTP with either L-glutamine or ammonia as the source of nitrogen. Regulates intracellular CTP levels through interactions with the four ribonucleotide triphosphates. The sequence is that of CTP synthase from Nocardia farcinica (strain IFM 10152).